A 264-amino-acid polypeptide reads, in one-letter code: Probable aquaporin TIP3-1 (264 aa).

Transmembrane regions (helical) follow at residues 28–48 and 62–82; these read AAISEFLATAIFVFAAEGSIL and GLVAVSLAHALALAVAVAVAV. Positions 90 to 92 match the NPA 1 motif; the sequence is NPA. 3 consecutive transmembrane segments (helical) span residues 105–125, 149–169, and 176–196; these read LIRALFYWLAQLLGAVVATLL, AVLLEATMTFGLMYAYYATVI, and VGTIAPLAVGFLLGANMLAGG. Residues 204-206 carry the NPA 2 motif; it reads NPA. The chain crosses the membrane as a helical span at residues 224-244; sequence YWLGPFVGAGLAGLLYEYLVI.

It belongs to the MIP/aquaporin (TC 1.A.8) family. TIP (TC 1.A.8.10) subfamily. As to expression, expressed in leaves and at lower levels in roots.

The protein localises to the vacuole membrane. Its function is as follows. Aquaporins facilitate the transport of water and small neutral solutes across cell membranes. May be involved in transport from the vacuolar compartment to the cytoplasm. The sequence is that of Probable aquaporin TIP3-1 (TIP3-1) from Oryza sativa subsp. japonica (Rice).